The following is a 335-amino-acid chain: DNA-directed RNA polymerase subunit alpha (335 aa).

Residues 1–248 are alpha N-terminal domain (alpha-NTD); sequence MTIQTSRTLS…GLFAPLQEVS (248 aa). Residues 256 to 335 are alpha C-terminal domain (alpha-CTD); sequence KPDEDNQKNQ…LPRTREKGKA (80 aa).

This sequence belongs to the RNA polymerase alpha chain family. In terms of assembly, in cyanobacteria the RNAP catalytic core is composed of 2 alpha, 1 beta, 1 beta', 1 gamma and 1 omega subunit. When a sigma factor is associated with the core the holoenzyme is formed, which can initiate transcription.

The catalysed reaction is RNA(n) + a ribonucleoside 5'-triphosphate = RNA(n+1) + diphosphate. DNA-dependent RNA polymerase catalyzes the transcription of DNA into RNA using the four ribonucleoside triphosphates as substrates. The sequence is that of DNA-directed RNA polymerase subunit alpha from Synechococcus sp. (strain JA-2-3B'a(2-13)) (Cyanobacteria bacterium Yellowstone B-Prime).